We begin with the raw amino-acid sequence, 122 residues long: Urease subunit beta (122 aa).

Residues 102-122 (DGGTAVAGEPRPGIAAERDHQ) are disordered.

The protein belongs to the urease beta subunit family. In terms of assembly, heterotrimer of UreA (gamma), UreB (beta) and UreC (alpha) subunits. Three heterotrimers associate to form the active enzyme.

Its subcellular location is the cytoplasm. The catalysed reaction is urea + 2 H2O + H(+) = hydrogencarbonate + 2 NH4(+). Its pathway is nitrogen metabolism; urea degradation; CO(2) and NH(3) from urea (urease route): step 1/1. This is Urease subunit beta from Paenarthrobacter aurescens (strain TC1).